The chain runs to 319 residues: NADH-ubiquinone oxidoreductase chain 1 (319 aa).

8 helical membrane-spanning segments follow: residues 5–25 (TINSLMYIIPILIAVAFLTLM), 72–92 (LLISSPILALTTAMLIWTPIP), 102–122 (LGLLSILAISSMAVNSILWAG), 146–166 (VTLGIILLSILILTGGFTMQL), 173–193 (FTWLLTTSWPLAMMWFISTLA), 225–245 (FFLTEYANIIVMNLLTCILFI), 254–274 (ELFLINLITKTMILSLSFLWI), and 295–315 (LPLTMSLCLLHTSLPISTSGI).

Belongs to the complex I subunit 1 family.

Its subcellular location is the mitochondrion inner membrane. It carries out the reaction a ubiquinone + NADH + 5 H(+)(in) = a ubiquinol + NAD(+) + 4 H(+)(out). Functionally, core subunit of the mitochondrial membrane respiratory chain NADH dehydrogenase (Complex I) that is believed to belong to the minimal assembly required for catalysis. Complex I functions in the transfer of electrons from NADH to the respiratory chain. The immediate electron acceptor for the enzyme is believed to be ubiquinone. The polypeptide is NADH-ubiquinone oxidoreductase chain 1 (MT-ND1) (Varanus flavescens (Yellow monitor)).